We begin with the raw amino-acid sequence, 2039 residues long: Methylcytosine dioxygenase TET1 (2039 aa).

Positions 1–19 are enriched in basic residues; that stretch reads MSRSRPAKPSKSVKTKLQK. Disordered regions lie at residues 1-79, 119-168, and 227-286; these read MSRS…AGAA, VVTP…NGEQ, and DNEC…GFPD. Composition is skewed to basic and acidic residues over residues 53-65 and 138-149; these read KRRD…EDKT and IQDEPGVKHSEN. 2 stretches are compositionally biased toward polar residues: residues 150–168 and 241–265; these read DSVP…NGEQ and QRST…SQVE. The tract at residues 512-657 is sufficient for binding to genomic CpG islands; that stretch reads LDLTQGSQAA…NGPKSESMDC (146 aa). The CXXC-type zinc finger occupies 567-608; that stretch reads ERRKRKACGVCEPCQQKANCGECTYCKNRKNSHQICKKRKCE. Zn(2+) contacts are provided by C574, C577, C580, C586, C589, C592, C602, and C607. 8 disordered regions span residues 613–670, 711–735, 820–859, 882–906, 964–993, 1050–1129, 1209–1240, and 1322–1341; these read KPEA…QRLD, CDAN…NPSP, GAEP…VQPS, QLSE…HQKT, QGYP…SHPL, VRNA…KKQE, VEPS…QGQP, and KREA…DSAQ. Residues 653 to 670 are compositionally biased toward basic and acidic residues; that stretch reads ESMDCSRRGHGEEEQRLD. Residues 825–835 are compositionally biased toward polar residues; sequence IFNNHPNTHSA. Basic and acidic residues predominate over residues 840-852; that stretch reads HPPEKVPNKEPKD. S854 is subject to Phosphoserine. The span at 884–894 shows a compositional bias: low complexity; sequence SEAPSESSSPS. Positions 895–904 are enriched in basic and acidic residues; that stretch reads KPEKDEEAHQ. The span at 1053 to 1064 shows a compositional bias: polar residues; sequence AESTPESLVAKN. Over residues 1094 to 1116 the composition is skewed to basic residues; it reads KPKKAQKKARATPHANKRKKKPP. 2 stretches are compositionally biased toward polar residues: residues 1214-1227 and 1326-1341; these read SLPT…SGGQ and QTSS…DSAQ. Zn(2+) contacts are provided by C1371, C1373, C1430, H1456, and C1458. 2-oxoglutarate is bound at residue R1499. Zn(2+)-binding residues include C1509, C1511, C1527, and C1536. Positions 1528-1541 are interaction with DNA; that stretch reads SWSMYFNGCKFGRS. K1537 participates in a covalent cross-link: Glycyl lysine isopeptide (Lys-Gly) (interchain with G-Cter in ubiquitin). C1628 is a binding site for Zn(2+). C1644 contacts 2-oxoglutarate. H1650 serves as a coordination point for Zn(2+). H1652 and D1654 together coordinate Fe cation. A substrate-binding site is contributed by N1657. Residue H1685 participates in 2-oxoglutarate binding. Residues 1734 to 1743 are compositionally biased toward basic residues; it reads GKRAKMKQNH. 2 disordered regions span residues 1734-1760 and 1830-1901; these read GKRA…ASST and AAHP…LPQL. Low complexity predominate over residues 1748-1760; the sequence is SHNTKSFSSASST. Positions 1850–1875 are enriched in polar residues; it reads TSPSEQLTSNQSNQQLPLLSNSQKLA. The segment covering 1880–1895 has biased composition (basic and acidic residues); sequence EDERHPEADEPQHPED. Position 1939 (H1939) interacts with Fe cation. 1954–1956 provides a ligand contact to 2-oxoglutarate; sequence RVS. Substrate is bound at residue 1960 to 1962; that stretch reads YQH. Position 1970 (H1970) interacts with Zn(2+).

The protein belongs to the TET family. As to quaternary structure, interacts with SIN3A; recruits the transcriptional co-repressor SIN3A to gene promoters. Interacts with HCFC1. Interacts (via C-terminus) with OGT. Found in a complex composed of at least SINHCAF, SIN3A, HDAC1, SAP30, RBBP4, OGT and TET1. Interacts with QSER1. Interacts with NONO (via DNA-binding domain); this interaction recruits TET1 to genomic loci. Interacts with FOXA2; this interaction may recruit TET1 to specific enhancers to preserve their unmethylated status and hence allowing gene expression. Interacts with RNF2. Directly interacts (via C-terminus) with the DCAF1 component of the CRL4(VprBP) E3 ubiquitin-protein ligase complex. In terms of assembly, interacts with UHRF1; this interaction induces the recruitment of TET1 to replicating heterochromatin. Interacts with DCAF1. Requires Fe(2+) as cofactor. It depends on Zn(2+) as a cofactor. Post-translationally, glycosylated. Interaction with OGT leads to GlcNAcylation. Monoubiquitinated by the DCX (DDB1-CUL4-X-box) E3 ubiquitin-protein ligase complex called CRL4(VprBP) or CUL4A-RBX1-DDB1-DCAF1/VPRBP complex. In terms of processing, monoubiquitinated by the DCX (DDB1-CUL4-X-box) E3 ubiquitin-protein ligase complex called CRL4(VprBP) or CUL4A-RBX1-DDB1-DCAF1/VPRBP complex; this modification promotes binding to DNA. As to expression, expressed in germinal vesicle (GV) stage and MII-stage oocytes and in early embryos. Also detected somatic tissues, including brain, liver and kidney, but at very low levels. Predominantly expressed in early embryos. Also expressed in embryonic stem cells and in primordial germ cells. Expressed in adult tissues, including brain cortex, cerebellum, heart, kidney, liver, muscle and spleen, although at much lower levels than isoform 2. In the brain, expressed at higher levels in glial cells than in neurons. Expressed in placenta. Expressed in the pituitary, most probably in thyrotropes. In terms of tissue distribution, preferentially expressed in differentiated cells, including in cerebral cortex, cerebellum and thymus. Also expressed in heart, kidney, liver, muscle and spleen at much higher levels than isoform 1. In the brain, expressed at higher levels in neurons than in glial cells. Expressed in the olfactory bulb and in the mammary gland.

The protein resides in the nucleus. It localises to the chromosome. The catalysed reaction is a 5-methyl-2'-deoxycytidine in DNA + 2-oxoglutarate + O2 = a 5-hydroxymethyl-2'-deoxycytidine in DNA + succinate + CO2. It catalyses the reaction a 5-hydroxymethyl-2'-deoxycytidine in DNA + 2-oxoglutarate + O2 = a 5-formyl-2'-deoxycytidine in DNA + succinate + CO2 + H2O. It carries out the reaction a 5-formyl-2'-deoxycytidine in DNA + 2-oxoglutarate + O2 = a 5-carboxyl-2'-deoxycytidine in DNA + succinate + CO2 + H(+). Dioxygenase that plays a key role in active DNA demethylation, by catalyzing the sequential oxidation of the modified genomic base 5-methylcytosine (5mC) into 5-hydroxymethylcytosine (5hmC), 5-formylcytosine (5fC), and 5-carboxylcytosine (5caC). In addition to its role in DNA demethylation, plays a more general role in chromatin regulation by recruiting histone modifying protein complexes to alter histone marks and chromatin accessibility, leading to both activation and repression of gene expression. Plays therefore a role in many biological processes, including stem cell maintenance, T- and B-cell development, inflammation regulation, iron homeostasis, neural activity or DNA repair. Involved in the balance between pluripotency and lineage commitment of cells it plays a role in embryonic stem cells maintenance and inner cell mass cell specification. Together with QSER1, plays an essential role in the protection and maintenance of transcriptional and developmental programs to inhibit the binding of DNMT3A/3B and therefore de novo methylation. May play a role in the pancreatic beta-cell specification during development. In this context, may function as an upstream epigenetic regulator of PAX4 presumably through direct recruitment by FOXA2 to a PAX4 enhancer to preserve its unmethylated status, thereby potentiating PAX4 expression to adopt beta-cell fate during endocrine lineage commitment. Under DNA hypomethylation conditions, such as in female meiotic germ cells, may induce epigenetic reprogramming of pericentromeric heterochromatin (PCH), the constitutive heterochromatin of pericentromeric regions. PCH forms chromocenters in the interphase nucleus and chromocenters cluster at the prophase of meiosis. In this context, may also be essential for chromocenter clustering in a catalytic activity-independent manner, possibly through the recruitment polycomb repressive complex 1 (PRC1) to the chromocenters. During embryonic development, may be required for normal meiotic progression in oocytes and meiotic gene activation. Binds preferentially to DNA containing cytidine-phosphate-guanosine (CpG) dinucleotides over CpH (H=A, T, and C), hemimethylated-CpG and hemimethylated-hydroxymethyl-CpG. Its function is as follows. Dioxygenase that plays a key role in active DNA demethylation. Binds to promoters, particularly to those with high CG content. In hippocampal neurons, isoform 1 regulates the expression of a unique subset of genes compared to isoform 2, although some overlap between both isoforms, hence differentially regulates excitatory synaptic transmission. In hippocampal neuron cell cultures, isoform 1 controls both miniature excitatory postsynaptic current amplitude and frequency. Isoform 1 may regulate genes involved in hippocampal-dependent memory, leading to positive regulation of memory, contrary to isoform 2 that may decrease memory. Functionally, dioxygenase that plays a key role in active DNA demethylation. As isoform 1, binds to promoters, particularly to those with high CG content, however displays reduced global chromatin affinity compared with isoform 1, leading to decreased global DNA demethylation compared with isoform 1. Contrary to isoform 1, isoform 2 localizes during S phase to sites of ongoing DNA replication in heterochromatin, causing a significant de novo 5hmC formation, globally, and more so in heterochromatin, including LINE 1 interspersed DNA repeats leading to their activation. In hippocampal neurons, isoform 2 regulates the expression of a unique subset of genes compared with isoform 1, although some overlap between both isoforms, hence differentially regulating excitatory synaptic transmission. In hippocampal neuron cell cultures, isoform 2 controls miniature excitatory postsynaptic current frequency, but not amplitude. Isoform 2 may regulate genes involved in hippocampal-dependent memory, leading to negative regulation of memory, contrary to isoform 1 that may improve memory. In immature and partially differentiated gonadotrope cells, represses luteinizing hormone gene LHB expression directly and does not catalyze 5hmC at the gene promoter. The polypeptide is Methylcytosine dioxygenase TET1 (Tet1) (Mus musculus (Mouse)).